The primary structure comprises 406 residues: Glycosylated lysosomal membrane protein (406 aa).

A signal peptide spans 1–35 (MRGSVECTWGWGHCAPSPLLLWTLLLFAAPFGLLG). Residues 36–372 (EKTRQVSLEV…VDGLSPLVLG (337 aa)) lie on the Lumenal side of the membrane. N-linked (GlcNAc...) asparagine glycans are attached at residues asparagine 65, asparagine 134, asparagine 159, asparagine 187, and asparagine 230. A helical membrane pass occupies residues 373 to 393 (IMAVALGAPGLMLLGGGLVLL). The Cytoplasmic portion of the chain corresponds to 394–406 (LHHKKYSEYQSIN). Residues 402–406 (YQSIN) carry the Lysosomal targeting motif motif.

The protein belongs to the GLMP family. In terms of assembly, interacts (via lumenal domain) with lysosomal protein MFSD1; the interaction starts while both proteins are still in the endoplasmic reticulum and is required for stabilization of MFSD1 in lysosomes but has no direct effect on its targeting to lysosomes or transporter activity. Highly N-glycosylated. N-glycosylation is essential for GLMP stability and for MFSD1 lysosomal localization.

The protein resides in the lysosome membrane. Functionally, required to protect lysosomal transporter MFSD1 from lysosomal proteolysis and for MFSD1 lysosomal localization. In Homo sapiens (Human), this protein is Glycosylated lysosomal membrane protein.